We begin with the raw amino-acid sequence, 62 residues long: Conotoxin Qc5.1 (62 aa).

The signal sequence occupies residues 1 to 22; that stretch reads MRCVPVFIILLLLSPSAPSVDA. Positions 23–48 are excised as a propeptide; sequence HPMTKDDVPQASFHDDAKRTLQVPWM. At Val-60 the chain carries Valine amide.

It belongs to the conotoxin T superfamily. Contains 2 disulfide bonds that can be either 'C1-C3, C2-C4' or 'C1-C4, C2-C3', since these disulfide connectivities have been observed for conotoxins with cysteine framework V (for examples, see AC P0DQQ7 and AC P81755). As to expression, expressed by the venom duct.

The protein localises to the secreted. The sequence is that of Conotoxin Qc5.1 from Conus quercinus (Oak cone).